A 483-amino-acid chain; its full sequence is UDP-N-acetylmuramoyl-L-alanyl-D-glutamate--2,6-diaminopimelate ligase 2 (483 aa).

Residue Ser30 coordinates UDP-N-acetyl-alpha-D-muramoyl-L-alanyl-D-glutamate. 111–117 (GTNGKTT) serves as a coordination point for ATP. UDP-N-acetyl-alpha-D-muramoyl-L-alanyl-D-glutamate-binding positions include 156-157 (TT), Thr183, and Arg191. Lys223 carries the N6-carboxylysine modification. Residues Arg380, 404-407 (DNPR), Gly456, and Glu460 each bind meso-2,6-diaminopimelate. The Meso-diaminopimelate recognition motif motif lies at 404-407 (DNPR).

It belongs to the MurCDEF family. MurE subfamily. Mg(2+) serves as cofactor. Carboxylation is probably crucial for Mg(2+) binding and, consequently, for the gamma-phosphate positioning of ATP.

It is found in the cytoplasm. The catalysed reaction is UDP-N-acetyl-alpha-D-muramoyl-L-alanyl-D-glutamate + meso-2,6-diaminopimelate + ATP = UDP-N-acetyl-alpha-D-muramoyl-L-alanyl-gamma-D-glutamyl-meso-2,6-diaminopimelate + ADP + phosphate + H(+). It participates in cell wall biogenesis; peptidoglycan biosynthesis. Its function is as follows. Catalyzes the addition of meso-diaminopimelic acid to the nucleotide precursor UDP-N-acetylmuramoyl-L-alanyl-D-glutamate (UMAG) in the biosynthesis of bacterial cell-wall peptidoglycan. The chain is UDP-N-acetylmuramoyl-L-alanyl-D-glutamate--2,6-diaminopimelate ligase 2 from Clostridium acetobutylicum (strain ATCC 824 / DSM 792 / JCM 1419 / IAM 19013 / LMG 5710 / NBRC 13948 / NRRL B-527 / VKM B-1787 / 2291 / W).